Consider the following 195-residue polypeptide: Large ribosomal subunit protein uL18 (195 aa).

This sequence belongs to the universal ribosomal protein uL18 family. As to quaternary structure, part of the 50S ribosomal subunit. Contacts the 5S and 23S rRNAs.

In terms of biological role, this is one of the proteins that bind and probably mediate the attachment of the 5S RNA into the large ribosomal subunit, where it forms part of the central protuberance. This Methanococcus vannielii protein is Large ribosomal subunit protein uL18.